Consider the following 173-residue polypeptide: ATP synthase subunit b (173 aa).

A helical membrane pass occupies residues 12-34; it reads AFGNLYAIGWSAVNFLVLLALMY.

This sequence belongs to the ATPase B chain family. F-type ATPases have 2 components, F(1) - the catalytic core - and F(0) - the membrane proton channel. F(1) has five subunits: alpha(3), beta(3), gamma(1), delta(1), epsilon(1). F(0) has three main subunits: a(1), b(2) and c(10-14). The alpha and beta chains form an alternating ring which encloses part of the gamma chain. F(1) is attached to F(0) by a central stalk formed by the gamma and epsilon chains, while a peripheral stalk is formed by the delta and b chains.

It is found in the cell membrane. Functionally, f(1)F(0) ATP synthase produces ATP from ADP in the presence of a proton or sodium gradient. F-type ATPases consist of two structural domains, F(1) containing the extramembraneous catalytic core and F(0) containing the membrane proton channel, linked together by a central stalk and a peripheral stalk. During catalysis, ATP synthesis in the catalytic domain of F(1) is coupled via a rotary mechanism of the central stalk subunits to proton translocation. Component of the F(0) channel, it forms part of the peripheral stalk, linking F(1) to F(0). The polypeptide is ATP synthase subunit b (Syntrophomonas wolfei subsp. wolfei (strain DSM 2245B / Goettingen)).